The following is a 248-amino-acid chain: Ras-related protein Rab-28 (248 aa).

A disordered region spans residues 1–30; it reads MTTMGEDEAPALPKKSPLPEKIDEADVDDD. A GTP-binding site is contributed by 42 to 50; it reads GDGASGKTS. Positions 64–72 match the Effector region motif; the sequence is YHQTLGLDF. GTP-binding positions include 91–95, 152–155, and 182–184; these read DIGGQ, NKTD, and SAK. The interval 227–248 is disordered; sequence QSDASYARRSDQSRSTSVCSIT. A compositionally biased stretch (polar residues) spans 239–248; the sequence is SRSTSVCSIT.

Belongs to the small GTPase superfamily. Rab family. In terms of tissue distribution, expressed in amphid and phasmid ciliated sensory neurons.

It localises to the cell projection. The protein localises to the cilium membrane. Its subcellular location is the perikaryon. It is found in the cytoplasm. The protein resides in the cytoskeleton. It localises to the cilium axoneme. Its function is as follows. GTPase. Intraflagellar transport (IFT) cargo that undergoes bidirectional IFT along the ciliary axoneme when in active GTP-bound state in amphid and phasmid ciliated sensory neurons. Targeting and function as IFT cargo may depend on the BBSome, an IFT cargo adapter. Does not undergo IFT when in inactive GDP-bound state. May in turn play a role in cilium structure and/or function in ciliated sensory neurons. The polypeptide is Ras-related protein Rab-28 (Caenorhabditis elegans).